Here is a 30-residue protein sequence, read N- to C-terminus: uncharacterized protein (30 aa).

A helical transmembrane segment spans residues 9–26 (YRLVIIVLISVYYRYRFF).

It is found in the plastid. Its subcellular location is the chloroplast membrane. This is an uncharacterized protein from Marchantia polymorpha (Common liverwort).